The chain runs to 304 residues: UDP-3-O-acyl-N-acetylglucosamine deacetylase (304 aa).

Residues His-78, His-237, and Asp-241 each coordinate Zn(2+). His-264 functions as the Proton donor in the catalytic mechanism.

It belongs to the LpxC family. Requires Zn(2+) as cofactor.

The catalysed reaction is a UDP-3-O-[(3R)-3-hydroxyacyl]-N-acetyl-alpha-D-glucosamine + H2O = a UDP-3-O-[(3R)-3-hydroxyacyl]-alpha-D-glucosamine + acetate. It participates in glycolipid biosynthesis; lipid IV(A) biosynthesis; lipid IV(A) from (3R)-3-hydroxytetradecanoyl-[acyl-carrier-protein] and UDP-N-acetyl-alpha-D-glucosamine: step 2/6. In terms of biological role, catalyzes the hydrolysis of UDP-3-O-myristoyl-N-acetylglucosamine to form UDP-3-O-myristoylglucosamine and acetate, the committed step in lipid A biosynthesis. The chain is UDP-3-O-acyl-N-acetylglucosamine deacetylase from Thioalkalivibrio sulfidiphilus (strain HL-EbGR7).